Reading from the N-terminus, the 320-residue chain is MPKKKTGARKKAENRREREKQLRASRSTIDLAKHPCNASMECDKCQRRQKNRAFCYFCNSVQKLPICAQCGKTKCMMKSSDCVIKHAGVYSTGLAMVGAICDFCEAWVCHGRKCLSTHACACPLTDAECVECERGVWDHGGRIFSCSFCHNFLCEDDQFEHQASCQVLEAETFKCVSCNRLGQHSCLRCKACFCDDHTRSKVFKQEKGKQPPCPKCGHETQETKDLSMSTRSLKFGRQTGGEEGDGASGYDAYWKNLASDKYAGASYHDEEEDEYEAEDDEEEEDEGGKDSDAESSDLFTNLNLGRTYASGYAHYEEQEN.

The segment at 1–23 is disordered; it reads MPKKKTGARKKAENRREREKQLR. The Nuclear localization signal signature appears at 3–11; sequence KKKTGARKK. The span at 10–22 shows a compositional bias: basic and acidic residues; it reads KKAENRREREKQL. 4 C4-type zinc fingers span residues 42–58, 67–104, 129–149, and 175–189; these read CDKC…CYFC, CAQC…CDFC, CVEC…CSFC, and CVSC…CLRC. 2 disordered regions span residues 206 to 250 and 264 to 303; these read EKGK…ASGY and GASY…TNLN. Residues 216 to 225 are compositionally biased toward basic and acidic residues; it reads CGHETQETKD. Acidic residues predominate over residues 269–287; the sequence is DEEEDEYEAEDDEEEEDEG. Position 291 is a phosphoserine (Ser291).

This sequence belongs to the NOA36 family.

The protein resides in the nucleus. Its subcellular location is the nucleolus. It is found in the chromosome. The protein localises to the centromere. In Bos taurus (Bovine), this protein is Zinc finger protein 330 (ZNF330).